We begin with the raw amino-acid sequence, 831 residues long: Myosin-A (831 aa).

Residues 99–773 (MTYGDIGMLP…GAKELTQIQR (675 aa)) enclose the Myosin motor domain. Residue 193 to 200 (GESGAGKT) coordinates ATP. The segment at 663–673 (PHFIRCIKPND) is actin-binding. The interval 775–831 (CLSSWEPLVSVLEAYYAGRRHKKQLLKKTPFIIRAQAHIRRHLVDNNVSPATVQPAF) is tail.

The protein belongs to the TRAFAC class myosin-kinesin ATPase superfamily. Myosin family.

The protein localises to the cell membrane. Myosins are actin-based motor molecules with ATPase activity. Unconventional myosins serve in intracellular movements. Their highly divergent tails are presumed to bind to membranous compartments, which would be moved relative to actin filaments. This is Myosin-A from Toxoplasma gondii.